A 523-amino-acid chain; its full sequence is 2,3-bisphosphoglycerate-independent phosphoglycerate mutase (523 aa).

2 residues coordinate Mn(2+): Asp13 and Ser63. Ser63 serves as the catalytic Phosphoserine intermediate. Substrate-binding positions include His124, 156–157, Arg188, Arg194, 268–271, and Lys341; these read RD and RSDR. Residues Asp408, His412, Asp449, His450, and His467 each contribute to the Mn(2+) site.

Belongs to the BPG-independent phosphoglycerate mutase family. In terms of assembly, monomer. Mn(2+) is required as a cofactor.

The catalysed reaction is (2R)-2-phosphoglycerate = (2R)-3-phosphoglycerate. The protein operates within carbohydrate degradation; glycolysis; pyruvate from D-glyceraldehyde 3-phosphate: step 3/5. In terms of biological role, catalyzes the interconversion of 2-phosphoglycerate and 3-phosphoglycerate. In Salinibacter ruber (strain DSM 13855 / M31), this protein is 2,3-bisphosphoglycerate-independent phosphoglycerate mutase.